Here is a 670-residue protein sequence, read N- to C-terminus: Receptor for retinol uptake stra6 (670 aa).

Residues 1-38 (MSAETVNNYDYSDWYENAAPTKAPVEVIPPCDPTADEG) lie on the Extracellular side of the membrane. The helical transmembrane segment at 39–59 (LFHICIAAISLVVMLVLAILA) threads the bilayer. Topologically, residues 60–87 (RRQKLSDNQRGLTGLLSPVNFLDHTQHK) are cytoplasmic. Residues 88 to 108 (GLAVAVYGVLFCKLVGMVLSH) traverse the membrane as a helical segment. The Extracellular segment spans residues 109–121 (HPLPFTKEVANKE). A helical transmembrane segment spans residues 122–142 (FWMILALLYYPALYYPLLACG). The Cytoplasmic segment spans residues 143–145 (TLH). A helical membrane pass occupies residues 146 to 166 (NKVGYVLGSLLSWTHFGILVW). Over 167–182 (QKVDCPKTPQIYKYYA) the chain is Extracellular. The chain crosses the membrane as a helical span at residues 183 to 203 (LFGSLPQIACLAFLSFQYPLL). Topologically, residues 204-274 (LFKGLQNTET…PEDVFRFPLK (71 aa)) are cytoplasmic. A helical transmembrane segment spans residues 275–295 (LAISVVVAFIALYQMALLLIS). At 296–346 (GVLPTLHIVRRGVDENIAFLLAGFNIILSNDRQEVVRIVVYYLWCVEICYV) the chain is on the extracellular side. A helical membrane pass occupies residues 347-367 (SAVTLSCLVNLLMLMRSMVLH). Over 368–401 (RSNLKGLYRGDSLNVFNCHRSIRPSRPALVCWMG) the chain is Cytoplasmic. Residues 402–422 (FTSYQAAFLCLGMAIQTLVFF) traverse the membrane as a helical segment. Residues 423–452 (ICILFAVFLIIIPILWGTNLMLFHIIGNLW) are Extracellular-facing. Residues 453–473 (PFWLTLVLAALIQHVASRFLF) traverse the membrane as a helical segment. Residues 474–488 (IRKDGGTRDLNNRGS) lie on the Cytoplasmic side of the membrane. The helical intramembrane region spans 489 to 526 (LFLLSYILFLVNVMIGVVLGIWRVVITALFNIVHLGRL). At 527 to 670 (DISLLNRNVE…KEAESAAASN (144 aa)) the chain is on the cytoplasmic side. Positions 600-626 (VSNAKRARAHWQLLYTLVNNPSLVGSR) are interaction with calmodulin. Positions 640-670 (GALSRTSKEGSKKDGSVNEPSKEAESAAASN) are disordered. Basic and acidic residues predominate over residues 645–664 (TSKEGSKKDGSVNEPSKEAE).

Homodimer. Interacts (via C-terminus) with calmodulin.

The protein localises to the cell membrane. Functionally, retinol transporter. Accepts retinol from the extracellular retinol-binding protein rbp4, mediates retinol transport across the cell membrane, and then transmits retinol to the cytoplasmic retinol-binding protein rbp1. Required for normal vitamin A homeostasis. The polypeptide is Receptor for retinol uptake stra6 (Danio rerio (Zebrafish)).